Here is a 634-residue protein sequence, read N- to C-terminus: Dynein axonemal assembly factor 1 (634 aa).

The tract at residues 1–80 (MHPEVSEPPV…SRDDREDRGP (80 aa)) is disordered. Residues 22 to 42 (AGDHGDAGPGIRKEEISETKE) show a composition bias toward basic and acidic residues. Over residues 48-62 (CTTSCPSQQQPSGDN) the composition is skewed to polar residues. The segment covering 70 to 80 (HSRDDREDRGP) has biased composition (basic and acidic residues). LRR repeat units lie at residues 101–123 (ALNDTLYLHFKGFDRIENLEEYT), 124–145 (GLRCLWLECNGIQRIENLQAQS), 146–167 (ELRCLFLQVNLLHKIENLEPLQ), 168–189 (KLDALNLSNNYIKTIENLSCLP), 190–211 (VLNTLQMAHNRLETVADIEHLR), and 215–236 (RLCVLDLSHNALSDPEILSVLE). Positions 249-288 (NPVTKHIPNYRRTVTVRLKHLTYLDDRPVFPKDRACAEAW) constitute an LRRCT domain. Residues 326 to 336 (EERKKARDRGE) show a composition bias toward basic and acidic residues. Residues 326-358 (EERKKARDRGETPLPDSEGSIPTSPEAEEKQPM) form a disordered region. The residue at position 349 (serine 349) is a Phosphoserine. Threonine 462 bears the Phosphothreonine mark. Phosphoserine is present on residues serine 465 and serine 488. 2 disordered regions span residues 481–505 (ISSLSDDSDPELDELSLSTSEATPT) and 559–634 (ELND…FGLD).

Belongs to the DNAAF1 family.

It localises to the cell projection. Its subcellular location is the cilium. Functionally, cilium-specific protein required for the stability of the ciliary architecture. Plays a role in cytoplasmic preassembly of dynein arms. Involved in regulation of microtubule-based cilia and actin-based brush border microvilli. The chain is Dynein axonemal assembly factor 1 (Dnaaf1) from Mus musculus (Mouse).